The following is a 213-amino-acid chain: MGQKVHPYGFRLGYTKNWLSRWFSSKDYPAFVYEDDSIRKYVKEKIFHAGVSKIEIERAGGKIRLIIHTARPGIIIGRKGVEIEKLREDLRRKFNKEFALEVSEIRRPETDAQLVAENIAQQLERRVAFRRAMKRIVGLARKFGAEGIKVACAGRLAGAEIARTEWYRDGRVPLQTLRADIDYGVARANTTYGVIGIKVWIFKGEILDHEVEQ.

Positions I38 to R106 constitute a KH type-2 domain.

This sequence belongs to the universal ribosomal protein uS3 family. In terms of assembly, part of the 30S ribosomal subunit. Forms a tight complex with proteins S10 and S14.

Its function is as follows. Binds the lower part of the 30S subunit head. Binds mRNA in the 70S ribosome, positioning it for translation. This is Small ribosomal subunit protein uS3 from Maridesulfovibrio salexigens (strain ATCC 14822 / DSM 2638 / NCIMB 8403 / VKM B-1763) (Desulfovibrio salexigens).